The following is a 358-amino-acid chain: Aerobic magnesium-protoporphyrin IX monomethyl ester [oxidative] cyclase (358 aa).

It belongs to the AcsF family. Fe cation serves as cofactor.

It catalyses the reaction Mg-protoporphyrin IX 13-monomethyl ester + 3 NADPH + 3 O2 + 2 H(+) = 3,8-divinyl protochlorophyllide a + 3 NADP(+) + 5 H2O. The protein operates within porphyrin-containing compound metabolism; chlorophyll biosynthesis. Its function is as follows. Catalyzes the formation of the isocyclic ring in chlorophyll biosynthesis in aerobic conditions. Mediates the cyclase reaction, which results in the formation of divinylprotochlorophyllide (Pchlide) characteristic of all chlorophylls from magnesium-protoporphyrin IX 13-monomethyl ester (MgPMME). The chain is Aerobic magnesium-protoporphyrin IX monomethyl ester [oxidative] cyclase from Rubrivivax gelatinosus (Rhodocyclus gelatinosus).